A 259-amino-acid polypeptide reads, in one-letter code: uncharacterized protein (259 aa).

The next 3 membrane-spanning stretches (helical) occupy residues 55-75 (ILIL…SYLI), 85-105 (FPSI…FFSS), and 127-147 (FFFA…LCCG).

Its subcellular location is the membrane. This is an uncharacterized protein from Arabidopsis thaliana (Mouse-ear cress).